Reading from the N-terminus, the 473-residue chain is Ribosomal protein uS12 methylthiotransferase RimO (473 aa).

Residues 30–141 form the MTTase N-terminal domain; it reads ASVAVLHLGC…IVQIIERVER (112 aa). [4Fe-4S] cluster-binding residues include cysteine 39, cysteine 75, cysteine 104, cysteine 179, cysteine 183, and cysteine 186. Residues 165–394 enclose the Radical SAM core domain; the sequence is TTHAPVAYLR…MQVQQGITFR (230 aa). Positions 397-463 constitute a TRAM domain; sequence REQVGRVVPV…PYDLFGQVVA (67 aa).

Belongs to the methylthiotransferase family. RimO subfamily. [4Fe-4S] cluster serves as cofactor.

The protein localises to the cytoplasm. It catalyses the reaction L-aspartate(89)-[ribosomal protein uS12]-hydrogen + (sulfur carrier)-SH + AH2 + 2 S-adenosyl-L-methionine = 3-methylsulfanyl-L-aspartate(89)-[ribosomal protein uS12]-hydrogen + (sulfur carrier)-H + 5'-deoxyadenosine + L-methionine + A + S-adenosyl-L-homocysteine + 2 H(+). Functionally, catalyzes the methylthiolation of an aspartic acid residue of ribosomal protein uS12. The protein is Ribosomal protein uS12 methylthiotransferase RimO of Synechococcus sp. (strain JA-2-3B'a(2-13)) (Cyanobacteria bacterium Yellowstone B-Prime).